The chain runs to 215 residues: Uridine kinase (215 aa).

16–23 contributes to the ATP binding site; sequence GASASGKS.

This sequence belongs to the uridine kinase family.

The protein localises to the cytoplasm. It carries out the reaction uridine + ATP = UMP + ADP + H(+). The enzyme catalyses cytidine + ATP = CMP + ADP + H(+). It functions in the pathway pyrimidine metabolism; CTP biosynthesis via salvage pathway; CTP from cytidine: step 1/3. The protein operates within pyrimidine metabolism; UMP biosynthesis via salvage pathway; UMP from uridine: step 1/1. The polypeptide is Uridine kinase (Aliivibrio fischeri (strain ATCC 700601 / ES114) (Vibrio fischeri)).